A 309-amino-acid polypeptide reads, in one-letter code: Probable 5-dehydro-4-deoxyglucarate dehydratase (309 aa).

The protein belongs to the DapA family.

It catalyses the reaction 5-dehydro-4-deoxy-D-glucarate + H(+) = 2,5-dioxopentanoate + CO2 + H2O. It participates in carbohydrate acid metabolism; D-glucarate degradation; 2,5-dioxopentanoate from D-glucarate: step 2/2. The polypeptide is Probable 5-dehydro-4-deoxyglucarate dehydratase (Saccharopolyspora erythraea (strain ATCC 11635 / DSM 40517 / JCM 4748 / NBRC 13426 / NCIMB 8594 / NRRL 2338)).